The following is a 98-amino-acid chain: Integration host factor subunit alpha (98 aa).

The segment covering 53–69 has biased composition (basic and acidic residues); sequence DLREKNERPGRNPKTGE. The interval 53–72 is disordered; that stretch reads DLREKNERPGRNPKTGEDIP.

This sequence belongs to the bacterial histone-like protein family. In terms of assembly, heterodimer of an alpha and a beta chain.

This protein is one of the two subunits of integration host factor, a specific DNA-binding protein that functions in genetic recombination as well as in transcriptional and translational control. The chain is Integration host factor subunit alpha from Vibrio atlanticus (strain LGP32) (Vibrio splendidus (strain Mel32)).